The sequence spans 256 residues: ATP synthase peripheral stalk subunit b, mitochondrial (256 aa).

A mitochondrion-targeting transit peptide spans 1-42 (MLSRVVLSAAATAAPCLKNAAALGPGVLQATRAFHTGQPRLA). N6-succinyllysine is present on K131. N6-acetyllysine is present on residues K139, K154, K162, K221, K225, K233, and K244.

It belongs to the eukaryotic ATPase B chain family. As to quaternary structure, component of the ATP synthase complex composed at least of ATP5F1A/subunit alpha, ATP5F1B/subunit beta, ATP5MC1/subunit c (homooctomer), MT-ATP6/subunit a, MT-ATP8/subunit 8, ATP5ME/subunit e, ATP5MF/subunit f, ATP5MG/subunit g, ATP5MK/subunit k, ATP5MJ/subunit j, ATP5F1C/subunit gamma, ATP5F1D/subunit delta, ATP5F1E/subunit epsilon, ATP5PF/subunit F6, ATP5PB/subunit b, ATP5PD/subunit d, ATP5PO/subunit OSCP. ATP synthase complex consists of a soluble F(1) head domain (subunits alpha(3) and beta(3)) - the catalytic core - and a membrane F(0) domain - the membrane proton channel (subunits c, a, 8, e, f, g, k and j). These two domains are linked by a central stalk (subunits gamma, delta, and epsilon) rotating inside the F1 region and a stationary peripheral stalk (subunits F6, b, d, and OSCP).

The protein resides in the mitochondrion. It localises to the mitochondrion inner membrane. Subunit b, of the mitochondrial membrane ATP synthase complex (F(1)F(0) ATP synthase or Complex V) that produces ATP from ADP in the presence of a proton gradient across the membrane which is generated by electron transport complexes of the respiratory chain. ATP synthase complex consist of a soluble F(1) head domain - the catalytic core - and a membrane F(1) domain - the membrane proton channel. These two domains are linked by a central stalk rotating inside the F(1) region and a stationary peripheral stalk. During catalysis, ATP synthesis in the catalytic domain of F(1) is coupled via a rotary mechanism of the central stalk subunits to proton translocation. In vivo, can only synthesize ATP although its ATP hydrolase activity can be activated artificially in vitro. Part of the complex F(0) domain. Part of the complex F(0) domain and the peripheric stalk, which acts as a stator to hold the catalytic alpha(3)beta(3) subcomplex and subunit a/ATP6 static relative to the rotary elements. This is ATP synthase peripheral stalk subunit b, mitochondrial from Mus musculus (Mouse).